The chain runs to 222 residues: Pyridoxine/pyridoxamine 5'-phosphate oxidase (222 aa).

FMN is bound by residues 71-76 (RMVLLK), 86-87 (YT), Lys93, and Gln115. Lys76 contributes to the substrate binding site. Substrate is bound by residues Tyr133, Arg137, and Ser141. Residues 150–151 (QS) and Trp195 each bind FMN. 201–203 (RLH) provides a ligand contact to substrate. An FMN-binding site is contributed by Arg205.

It belongs to the pyridoxamine 5'-phosphate oxidase family. As to quaternary structure, homodimer. FMN is required as a cofactor.

The enzyme catalyses pyridoxamine 5'-phosphate + O2 + H2O = pyridoxal 5'-phosphate + H2O2 + NH4(+). It carries out the reaction pyridoxine 5'-phosphate + O2 = pyridoxal 5'-phosphate + H2O2. The protein operates within cofactor metabolism; pyridoxal 5'-phosphate salvage; pyridoxal 5'-phosphate from pyridoxamine 5'-phosphate: step 1/1. It functions in the pathway cofactor metabolism; pyridoxal 5'-phosphate salvage; pyridoxal 5'-phosphate from pyridoxine 5'-phosphate: step 1/1. Catalyzes the oxidation of either pyridoxine 5'-phosphate (PNP) or pyridoxamine 5'-phosphate (PMP) into pyridoxal 5'-phosphate (PLP). This is Pyridoxine/pyridoxamine 5'-phosphate oxidase from Caulobacter vibrioides (strain ATCC 19089 / CIP 103742 / CB 15) (Caulobacter crescentus).